Reading from the N-terminus, the 138-residue chain is ATP synthase epsilon chain (138 aa).

Belongs to the ATPase epsilon chain family. F-type ATPases have 2 components, CF(1) - the catalytic core - and CF(0) - the membrane proton channel. CF(1) has five subunits: alpha(3), beta(3), gamma(1), delta(1), epsilon(1). CF(0) has three main subunits: a, b and c.

It is found in the cell membrane. In terms of biological role, produces ATP from ADP in the presence of a proton gradient across the membrane. The chain is ATP synthase epsilon chain from Caldanaerobacter subterraneus subsp. tengcongensis (strain DSM 15242 / JCM 11007 / NBRC 100824 / MB4) (Thermoanaerobacter tengcongensis).